A 732-amino-acid polypeptide reads, in one-letter code: TIR domain-containing adapter molecule 1 (732 aa).

Residues 1–153 (MDNPGPSLRG…CSSDIKGDPS (153 aa)) are TRIF-NTD. Positions 84–91 (EGPEEPPD) match the TRAF6-binding motif. Residues 144–191 (CSSDIKGDPSGFQPLHSHQGSLQPPSASPAVTRSQPRPIDTPDWSWGH) form a disordered region. Positions 159–178 (HSHQGSLQPPSASPAVTRSQ) are enriched in polar residues. The pLxIS motif motif lies at 206–209 (LEIS). Residue serine 209 is modified to Phosphoserine. Lysine 228 participates in a covalent cross-link: Glycyl lysine isopeptide (Lys-Gly) (interchain with G-Cter in ubiquitin). 2 short sequence motifs (TRAF6-binding) span residues 247-254 (QEPEEISW) and 296-306 (HCPIECTELST). Polar residues predominate over residues 305 to 331 (STNSRSPLTSTTESVGKQWPITSQRSP). The segment at 305–389 (STNSRSPLTS…TSTSPVLDHS (85 aa)) is disordered. Residues 345–359 (SSSPPAQPPSLQASP) are compositionally biased toward low complexity. The 140-residue stretch at 395-534 (KFYNFVVIHA…KVANTFKTQK (140 aa)) folds into the TIR domain. Positions 514–713 (WLDEHSPIFA…SSDDKTECSE (200 aa)) are sufficient to induce apoptosis. Disordered regions lie at residues 603 to 679 (TPSW…GPQP) and 696 to 732 (MWGH…ETPE). Pro residues-rich tracts occupy residues 604–615 (PSWPGCPQPIPS) and 625–657 (PYSP…PPVS). The span at 658–671 (SPQSQSFPSASSPA) shows a compositional bias: low complexity.

As to quaternary structure, homodimer. Found in a multi-helicase-TICAM1 complex at least composed of DHX36, DDX1, DDX21 and TICAM1; this complex exists in resting cells with or without poly(I:C) RNA ligand stimulation. Interacts (via TIR domain) with DDX21 (via C-terminus). Interacts (via TIR domain) with DHX36 (via C-terminus). Interacts with AZI2 and IRF7. Interacts (when phosphorylated) with IRF3; following activation and phosphorylation on the pLxIS motif by TBK1, recruits IRF3. Interacts with TICAM2 in TLR4 recruitment. Interaction with PIAS4 inhibits the TICAM1-induced NF-kappa-B, IRF and IFNB1 activation. Interacts with IKBKB and IKBKE. Interaction with SARM1 blocks TICAM1-dependent transcription factor activation. Interacts with TRAF3. Interacts with TRAFD1. Interacts with UBQLN1 (via UBA domain). Interacts with TBK1, TRAF6 and RIPK1 and these interactions are enhanced in the presence of WDFY1. Interacts (via the TIR domain) with TLR3 in response to poly(I:C) and this interaction is enhanced in the presence of WDFY1. Interacts with TLR4 in response to poly(I:C) in a WDFY1-dependent manner. Interacts with WDFY1 in response to poly(I:C). Interacts with TRIM56. Interacts (via the TIR domain) with TLR5. Interacts with TRIM8. Interacts with TAX1BP1 and TRIM32; these interactions target TICAM1 to TAX1BP1-mediated selective autophagic degradation. Interacts with DDX50. In terms of processing, phosphorylated by TBK1. Following activation, phosphorylated by TBK1 at Ser-209 in the pLxIS motif. The phosphorylated pLxIS motif constitutes an IRF3-binding motif, leading to recruitment of the transcription factor IRF3 to induce type-I interferons and other cytokines. Polyubiquitinated at Lys-228 by TRIM38 with 'Lys-48'-linked chains, leading to proteasomal degradation. Polyubiquitinated with 'Lys-6'- and 'Lys-33'-linked chains in a TRIM8-dependent manner; ubiquitination disrupts the interaction with TBK1 and subsequent interferon production.

The protein localises to the cytoplasm. It localises to the cytosol. Its subcellular location is the cytoplasmic vesicle. It is found in the autophagosome. The protein resides in the mitochondrion. Its function is as follows. Involved in innate immunity against invading pathogens. Adapter used by TLR3, TLR4 (through TICAM2) and TLR5 to mediate NF-kappa-B and interferon-regulatory factor (IRF) activation, and to induce apoptosis. Ligand binding to these receptors results in TRIF recruitment through its TIR domain. Distinct protein-interaction motifs allow recruitment of the effector proteins TBK1, TRAF6 and RIPK1, which in turn, lead to the activation of transcription factors IRF3 and IRF7, NF-kappa-B and FADD respectively. Phosphorylation by TBK1 on the pLxIS motif leads to recruitment and subsequent activation of the transcription factor IRF3 to induce expression of type I interferon and exert a potent immunity against invading pathogens. Component of a multi-helicase-TICAM1 complex that acts as a cytoplasmic sensor of viral double-stranded RNA (dsRNA) and plays a role in the activation of a cascade of antiviral responses including the induction of pro-inflammatory cytokines. The protein is TIR domain-containing adapter molecule 1 (Ticam1) of Mus musculus (Mouse).